The following is a 286-amino-acid chain: Probable tRNA(His) guanylyltransferase (286 aa).

3 residues coordinate Mg(2+): Asp29, Gly30, and Asp76. GTP-binding positions include 29-34 (DGKKFH) and 75-76 (SD).

Belongs to the tRNA(His) guanylyltransferase family. Mg(2+) serves as cofactor.

It catalyses the reaction a 5'-end ribonucleotide-tRNA(His) + GTP + ATP + H2O = a 5'-end phospho-guanosine-ribonucleotide-tRNA(His) + AMP + 2 diphosphate + H(+). Adds a GMP to the 5'-end of tRNA(His) after transcription and RNase P cleavage. This chain is Probable tRNA(His) guanylyltransferase, found in Drosophila melanogaster (Fruit fly).